The primary structure comprises 367 residues: 3-isopropylmalate dehydrogenase (367 aa).

80–93 (GKEWTHLPADEQPE) contributes to the NAD(+) binding site. Substrate contacts are provided by arginine 101, arginine 111, arginine 140, and aspartate 230. Residues aspartate 230, aspartate 254, and aspartate 258 each contribute to the Mg(2+) site. 288 to 300 (GSAPDLKGKNIAN) contributes to the NAD(+) binding site.

It belongs to the isocitrate and isopropylmalate dehydrogenases family. LeuB type 1 subfamily. As to quaternary structure, homodimer. Mg(2+) is required as a cofactor. It depends on Mn(2+) as a cofactor.

It is found in the cytoplasm. The catalysed reaction is (2R,3S)-3-isopropylmalate + NAD(+) = 4-methyl-2-oxopentanoate + CO2 + NADH. It functions in the pathway amino-acid biosynthesis; L-leucine biosynthesis; L-leucine from 3-methyl-2-oxobutanoate: step 3/4. Functionally, catalyzes the oxidation of 3-carboxy-2-hydroxy-4-methylpentanoate (3-isopropylmalate) to 3-carboxy-4-methyl-2-oxopentanoate. The product decarboxylates to 4-methyl-2 oxopentanoate. The protein is 3-isopropylmalate dehydrogenase (leuB) of Buchnera aphidicola subsp. Cinara cedri (strain Cc).